The primary structure comprises 1366 residues: DNA-directed RNA polymerase subunit beta (1366 aa).

The protein belongs to the RNA polymerase beta chain family. In terms of assembly, the RNAP catalytic core consists of 2 alpha, 1 beta, 1 beta' and 1 omega subunit. When a sigma factor is associated with the core the holoenzyme is formed, which can initiate transcription.

The enzyme catalyses RNA(n) + a ribonucleoside 5'-triphosphate = RNA(n+1) + diphosphate. Its function is as follows. DNA-dependent RNA polymerase catalyzes the transcription of DNA into RNA using the four ribonucleoside triphosphates as substrates. This Polynucleobacter asymbioticus (strain DSM 18221 / CIP 109841 / QLW-P1DMWA-1) (Polynucleobacter necessarius subsp. asymbioticus) protein is DNA-directed RNA polymerase subunit beta.